We begin with the raw amino-acid sequence, 339 residues long: D-erythrose-4-phosphate dehydrogenase (339 aa).

11-12 (RI) provides a ligand contact to NAD(+). Substrate contacts are provided by residues 153 to 155 (SCT), R199, 212 to 213 (TK), and R235. C154 acts as the Nucleophile in catalysis. N317 contacts NAD(+).

It belongs to the glyceraldehyde-3-phosphate dehydrogenase family. Epd subfamily. Homotetramer.

The protein resides in the cytoplasm. It carries out the reaction D-erythrose 4-phosphate + NAD(+) + H2O = 4-phospho-D-erythronate + NADH + 2 H(+). Its pathway is cofactor biosynthesis; pyridoxine 5'-phosphate biosynthesis; pyridoxine 5'-phosphate from D-erythrose 4-phosphate: step 1/5. In terms of biological role, catalyzes the NAD-dependent conversion of D-erythrose 4-phosphate to 4-phosphoerythronate. The protein is D-erythrose-4-phosphate dehydrogenase of Shewanella halifaxensis (strain HAW-EB4).